Reading from the N-terminus, the 138-residue chain is 1,4-dihydroxy-2-naphthoyl-CoA hydrolase (138 aa).

The active site involves Asp-16.

Belongs to the 4-hydroxybenzoyl-CoA thioesterase family. DHNA-CoA hydrolase subfamily.

The catalysed reaction is 1,4-dihydroxy-2-naphthoyl-CoA + H2O = 1,4-dihydroxy-2-naphthoate + CoA + H(+). It participates in cofactor biosynthesis; phylloquinone biosynthesis. It functions in the pathway quinol/quinone metabolism; 1,4-dihydroxy-2-naphthoate biosynthesis; 1,4-dihydroxy-2-naphthoate from chorismate: step 7/7. In terms of biological role, catalyzes the specific hydrolysis of 1,4-dihydroxy-2-naphthoyl-CoA (DHNA-CoA) to 1,4-dihydroxy-2-naphthoate (DHNA), a reaction involved in phylloquinone (vitamin K1) biosynthesis. Is not active on benzoyl-CoA, phenylacetyl-CoA and aliphatic acyl-CoA thioesters. The polypeptide is 1,4-dihydroxy-2-naphthoyl-CoA hydrolase (Synechocystis sp. (strain ATCC 27184 / PCC 6803 / Kazusa)).